A 745-amino-acid polypeptide reads, in one-letter code: VCP-like ATPase (745 aa).

ATP is bound by residues 231 to 238 and 508 to 515; these read GPPGTGKT and GPPGVGKT.

The protein belongs to the AAA ATPase family. CDC48 subfamily. In terms of assembly, homohexamer. Forms a ring-shaped particle.

This chain is VCP-like ATPase (vat), found in Thermoplasma acidophilum (strain ATCC 25905 / DSM 1728 / JCM 9062 / NBRC 15155 / AMRC-C165).